Here is a 506-residue protein sequence, read N- to C-terminus: Cobyric acid synthase (506 aa).

The region spanning 251 to 448 (DITIAIVQLP…LHGLFDSDAF (198 aa)) is the GATase cobBQ-type domain. The Nucleophile role is filled by Cys332. His440 is an active-site residue.

The protein belongs to the CobB/CobQ family. CobQ subfamily.

It participates in cofactor biosynthesis; adenosylcobalamin biosynthesis. Catalyzes amidations at positions B, D, E, and G on adenosylcobyrinic A,C-diamide. NH(2) groups are provided by glutamine, and one molecule of ATP is hydrogenolyzed for each amidation. The protein is Cobyric acid synthase of Salmonella agona (strain SL483).